Reading from the N-terminus, the 308-residue chain is Methionine synthase (308 aa).

Zn(2+)-binding residues include His-201, Cys-203, Glu-224, and Cys-285.

It belongs to the archaeal MetE family. Zn(2+) serves as cofactor.

Its pathway is amino-acid biosynthesis; L-methionine biosynthesis via de novo pathway. In terms of biological role, catalyzes the transfer of a methyl group to L-homocysteine resulting in methionine formation. Can use methylcobalamin and methylcobinamide as methyl donors, but methylcobalamin is not considered to be the physiological substrate. This is Methionine synthase from Methanothermobacter thermautotrophicus (strain ATCC 29096 / DSM 1053 / JCM 10044 / NBRC 100330 / Delta H) (Methanobacterium thermoautotrophicum).